The following is a 329-amino-acid chain: NADH-quinone oxidoreductase subunit H (329 aa).

Transmembrane regions (helical) follow at residues leucine 9–isoleucine 29, glycine 42–phenylalanine 62, leucine 75–isoleucine 95, isoleucine 117–glycine 137, isoleucine 154–valine 174, glycine 188–alanine 208, leucine 238–isoleucine 258, tryptophan 269–tryptophan 291, and tryptophan 309–isoleucine 329.

It belongs to the complex I subunit 1 family. In terms of assembly, NDH-1 is composed of 14 different subunits. Subunits NuoA, H, J, K, L, M, N constitute the membrane sector of the complex.

The protein resides in the cell inner membrane. The enzyme catalyses a quinone + NADH + 5 H(+)(in) = a quinol + NAD(+) + 4 H(+)(out). Functionally, NDH-1 shuttles electrons from NADH, via FMN and iron-sulfur (Fe-S) centers, to quinones in the respiratory chain. The immediate electron acceptor for the enzyme in this species is believed to be ubiquinone. Couples the redox reaction to proton translocation (for every two electrons transferred, four hydrogen ions are translocated across the cytoplasmic membrane), and thus conserves the redox energy in a proton gradient. This subunit may bind ubiquinone. The chain is NADH-quinone oxidoreductase subunit H from Helicobacter acinonychis (strain Sheeba).